The chain runs to 434 residues: Enolase (434 aa).

Q163 contacts (2R)-2-phosphoglycerate. Residue E205 is the Proton donor of the active site. Residues D242, E291, and D318 each contribute to the Mg(2+) site. K343, R372, S373, and K394 together coordinate (2R)-2-phosphoglycerate. The active-site Proton acceptor is K343.

It belongs to the enolase family. Mg(2+) is required as a cofactor.

It localises to the cytoplasm. It is found in the secreted. Its subcellular location is the cell surface. It catalyses the reaction (2R)-2-phosphoglycerate = phosphoenolpyruvate + H2O. Its pathway is carbohydrate degradation; glycolysis; pyruvate from D-glyceraldehyde 3-phosphate: step 4/5. In terms of biological role, catalyzes the reversible conversion of 2-phosphoglycerate (2-PG) into phosphoenolpyruvate (PEP). It is essential for the degradation of carbohydrates via glycolysis. This is Enolase from Streptococcus intermedius.